A 202-amino-acid polypeptide reads, in one-letter code: Peptide methionine sulfoxide reductase B2, chloroplastic (202 aa).

A chloroplast-targeting transit peptide spans 1–63 (MAFNIITPGR…RRGFHGGRIV (63 aa)). In terms of domain architecture, MsrB spans 77–198 (EEEWRAILSP…NSISLKFTPE (122 aa)). Residues cysteine 116, cysteine 119, cysteine 162, and cysteine 165 each contribute to the Zn(2+) site. Cysteine 134 and cysteine 187 form a disulfide bridge. Cysteine 187 (nucleophile) is an active-site residue.

The protein belongs to the MsrB Met sulfoxide reductase family. Requires Zn(2+) as cofactor. In terms of tissue distribution, expressed in stems, young leaves, floral buds and flowers. Expressed at low levels in roots, mature leaves and siliques (at protein level).

The protein localises to the plastid. The protein resides in the chloroplast. The enzyme catalyses L-methionyl-[protein] + [thioredoxin]-disulfide + H2O = L-methionyl-(R)-S-oxide-[protein] + [thioredoxin]-dithiol. Its function is as follows. Catalyzes the reduction of methionine sulfoxide (MetSO) to methionine in proteins. Specifically reduces the MetSO R-enantiomer. Plays a protective role against oxidative stress by restoring activity to proteins that have been inactivated by methionine oxidation. May play an essential function in association with MSRB1 in maintaining vegetative growth during environmental constraints, through the preservation of photosynthetic antennae. MSRB1 and MSRB2 account for most of the leaf peptide MSR capacity. The chain is Peptide methionine sulfoxide reductase B2, chloroplastic from Arabidopsis thaliana (Mouse-ear cress).